The primary structure comprises 357 residues: Protein RecA (357 aa).

71–78 contacts ATP; the sequence is GPESSGKT.

This sequence belongs to the RecA family.

It is found in the cytoplasm. Can catalyze the hydrolysis of ATP in the presence of single-stranded DNA, the ATP-dependent uptake of single-stranded DNA by duplex DNA, and the ATP-dependent hybridization of homologous single-stranded DNAs. It interacts with LexA causing its activation and leading to its autocatalytic cleavage. The sequence is that of Protein RecA from Ehrlichia chaffeensis (strain ATCC CRL-10679 / Arkansas).